We begin with the raw amino-acid sequence, 269 residues long: F-box protein At5g52880 (269 aa).

Positions 109-155 constitute an F-box domain; it reads DIDIPSLPQDILIHIFSFLEISSLVSSAQVSRSWNQATHENSLWQSQ.

The protein is F-box protein At5g52880 of Arabidopsis thaliana (Mouse-ear cress).